Reading from the N-terminus, the 611-residue chain is Threonine--tRNA ligase (611 aa).

A catalytic region spans residues D211–P509. 3 residues coordinate Zn(2+): C310, H361, and H486.

This sequence belongs to the class-II aminoacyl-tRNA synthetase family. In terms of assembly, homodimer. The cofactor is Zn(2+).

It localises to the cytoplasm. It catalyses the reaction tRNA(Thr) + L-threonine + ATP = L-threonyl-tRNA(Thr) + AMP + diphosphate + H(+). Its function is as follows. Catalyzes the attachment of threonine to tRNA(Thr) in a two-step reaction: L-threonine is first activated by ATP to form Thr-AMP and then transferred to the acceptor end of tRNA(Thr). Also edits incorrectly charged L-seryl-tRNA(Thr). This Nautilia profundicola (strain ATCC BAA-1463 / DSM 18972 / AmH) protein is Threonine--tRNA ligase.